A 177-amino-acid chain; its full sequence is Large ribosomal subunit protein uL6 (177 aa).

Belongs to the universal ribosomal protein uL6 family. Part of the 50S ribosomal subunit.

This protein binds to the 23S rRNA, and is important in its secondary structure. It is located near the subunit interface in the base of the L7/L12 stalk, and near the tRNA binding site of the peptidyltransferase center. The chain is Large ribosomal subunit protein uL6 from Variovorax paradoxus (strain S110).